A 348-amino-acid polypeptide reads, in one-letter code: Ion-translocating oxidoreductase complex subunit D (348 aa).

4 consecutive transmembrane segments (helical) span residues tryptophan 23–threonine 43, leucine 44–leucine 64, alanine 72–proline 91, and isoleucine 126–isoleucine 146. An FMN phosphoryl threonine modification is found at threonine 187. 5 helical membrane passes run phenylalanine 214 to leucine 234, isoleucine 243 to proline 263, threonine 266 to alanine 286, leucine 300 to proline 320, and aspartate 321 to threonine 341.

The protein belongs to the NqrB/RnfD family. As to quaternary structure, the complex is composed of six subunits: RnfA, RnfB, RnfC, RnfD, RnfE and RnfG. FMN serves as cofactor.

It is found in the cell inner membrane. Functionally, part of a membrane-bound complex that couples electron transfer with translocation of ions across the membrane. This chain is Ion-translocating oxidoreductase complex subunit D, found in Vibrio cholerae serotype O1 (strain ATCC 39315 / El Tor Inaba N16961).